The following is a 370-amino-acid chain: Cyclic dehypoxanthine futalosine synthase (370 aa).

The 246-residue stretch at 50–295 (TTFVIGRNVN…QSSWVTMGPE (246 aa)) folds into the Radical SAM core domain. [4Fe-4S] cluster is bound by residues Cys-64, Cys-68, and Cys-71.

The protein belongs to the radical SAM superfamily. MqnC family. Requires [4Fe-4S] cluster as cofactor.

The catalysed reaction is dehypoxanthine futalosine + S-adenosyl-L-methionine = cyclic dehypoxanthinylfutalosinate + 5'-deoxyadenosine + L-methionine + H(+). Its pathway is quinol/quinone metabolism; menaquinone biosynthesis. In terms of biological role, radical SAM enzyme that catalyzes the cyclization of dehypoxanthine futalosine (DHFL) into cyclic dehypoxanthine futalosine (CDHFL), a step in the biosynthesis of menaquinone (MK, vitamin K2). The polypeptide is Cyclic dehypoxanthine futalosine synthase (Halalkalibacterium halodurans (strain ATCC BAA-125 / DSM 18197 / FERM 7344 / JCM 9153 / C-125) (Bacillus halodurans)).